A 104-amino-acid chain; its full sequence is ATP-dependent Clp protease adapter protein ClpS (104 aa).

The protein belongs to the ClpS family. As to quaternary structure, binds to the N-terminal domain of the chaperone ClpA.

In terms of biological role, involved in the modulation of the specificity of the ClpAP-mediated ATP-dependent protein degradation. The polypeptide is ATP-dependent Clp protease adapter protein ClpS (Bordetella bronchiseptica (strain ATCC BAA-588 / NCTC 13252 / RB50) (Alcaligenes bronchisepticus)).